Consider the following 576-residue polypeptide: Putative SPbeta prophage-derived single-strand DNA-specific exonuclease YorK (576 aa).

At Y473 the chain carries Phosphotyrosine.

It belongs to the RecJ family.

Its function is as follows. Putative single-stranded-DNA-specific exonuclease. The sequence is that of Putative SPbeta prophage-derived single-strand DNA-specific exonuclease YorK (yorK) from Bacillus subtilis (strain 168).